The sequence spans 606 residues: Elongation factor 4 (606 aa).

Residues 7-189 enclose the tr-type G domain; sequence SRIRNFCIIA…AVVDRVPPPK (183 aa). GTP-binding positions include 19 to 24 and 136 to 139; these read DHGKST and NKID.

The protein belongs to the TRAFAC class translation factor GTPase superfamily. Classic translation factor GTPase family. LepA subfamily.

It is found in the cell inner membrane. It carries out the reaction GTP + H2O = GDP + phosphate + H(+). In terms of biological role, required for accurate and efficient protein synthesis under certain stress conditions. May act as a fidelity factor of the translation reaction, by catalyzing a one-codon backward translocation of tRNAs on improperly translocated ribosomes. Back-translocation proceeds from a post-translocation (POST) complex to a pre-translocation (PRE) complex, thus giving elongation factor G a second chance to translocate the tRNAs correctly. Binds to ribosomes in a GTP-dependent manner. In Synechococcus sp. (strain CC9605), this protein is Elongation factor 4.